Reading from the N-terminus, the 213-residue chain is Endoplasmic reticulum vesicle protein 25 (213 aa).

The first 20 residues, 1–20, serve as a signal peptide directing secretion; sequence MILRIPSLLYLFTLLTAVYA. The Lumenal portion of the chain corresponds to 21–181; sequence VKFDLTSDRN…TNESTNQRVK (161 aa). Residues 33 to 122 enclose the GOLD domain; that stretch reads PKCIWNFASA…VRSVELDVDI (90 aa). A helical membrane pass occupies residues 182–202; it reads VFSVLIICCTIGLGVWQLLHL. Residues 203–213 lie on the Cytoplasmic side of the membrane; it reads RSFFKRKYLID.

This sequence belongs to the EMP24/GP25L family.

Its subcellular location is the endoplasmic reticulum membrane. The protein resides in the golgi apparatus membrane. Constituent of COPII-coated endoplasmic reticulum-derived transport vesicles. Required for efficient transport of a subset of secretory proteins to the Golgi. Facilitates retrograde transport from the Golgi to the endoplasmic reticulum. The sequence is that of Endoplasmic reticulum vesicle protein 25 (ERV25) from Cryptococcus neoformans var. neoformans serotype D (strain JEC21 / ATCC MYA-565) (Filobasidiella neoformans).